The chain runs to 542 residues: Chaperonin GroEL (542 aa).

ATP contacts are provided by residues 29 to 32, 86 to 90, G413, 478 to 480, and D494; these read TLGP, DGTTT, and DAL.

Belongs to the chaperonin (HSP60) family. As to quaternary structure, forms a cylinder of 14 subunits composed of two heptameric rings stacked back-to-back. Interacts with the co-chaperonin GroES.

It localises to the cytoplasm. The enzyme catalyses ATP + H2O + a folded polypeptide = ADP + phosphate + an unfolded polypeptide.. Together with its co-chaperonin GroES, plays an essential role in assisting protein folding. The GroEL-GroES system forms a nano-cage that allows encapsulation of the non-native substrate proteins and provides a physical environment optimized to promote and accelerate protein folding. This chain is Chaperonin GroEL, found in Clostridioides difficile (strain 630) (Peptoclostridium difficile).